A 280-amino-acid chain; its full sequence is Phosphatidylglycerol--prolipoprotein diacylglyceryl transferase (280 aa).

Transmembrane regions (helical) follow at residues 30-50 (WYGL…RRII), 71-91 (FLLW…ILFY), 106-126 (IWNG…AIII), and 132-152 (AIPL…GLFF). Arginine 154 contacts a 1,2-diacyl-sn-glycero-3-phospho-(1'-sn-glycerol). The next 3 membrane-spanning stretches (helical) occupy residues 188-208 (QLYE…WFVY), 217-237 (GLVT…VEFF), and 251-271 (WLTM…WAIA).

It belongs to the Lgt family.

The protein resides in the cell inner membrane. The enzyme catalyses L-cysteinyl-[prolipoprotein] + a 1,2-diacyl-sn-glycero-3-phospho-(1'-sn-glycerol) = an S-1,2-diacyl-sn-glyceryl-L-cysteinyl-[prolipoprotein] + sn-glycerol 1-phosphate + H(+). It participates in protein modification; lipoprotein biosynthesis (diacylglyceryl transfer). In terms of biological role, catalyzes the transfer of the diacylglyceryl group from phosphatidylglycerol to the sulfhydryl group of the N-terminal cysteine of a prolipoprotein, the first step in the formation of mature lipoproteins. In Rhizobium meliloti (strain 1021) (Ensifer meliloti), this protein is Phosphatidylglycerol--prolipoprotein diacylglyceryl transferase.